A 106-amino-acid polypeptide reads, in one-letter code: Large ribosomal subunit protein uL24 (106 aa).

The interval 1 to 20 (MNKRAKSKNREPLRKSPVKR) is disordered. A compositionally biased stretch (basic and acidic residues) spans 8 to 20 (KNREPLRKSPVKR).

It belongs to the universal ribosomal protein uL24 family. As to quaternary structure, part of the 50S ribosomal subunit.

In terms of biological role, one of two assembly initiator proteins, it binds directly to the 5'-end of the 23S rRNA, where it nucleates assembly of the 50S subunit. Its function is as follows. One of the proteins that surrounds the polypeptide exit tunnel on the outside of the subunit. This is Large ribosomal subunit protein uL24 from Methylacidiphilum infernorum (isolate V4) (Methylokorus infernorum (strain V4)).